The chain runs to 518 residues: Cytochrome P450 monooxygenase ARMGADRAFT_1018417 (518 aa).

The chain crosses the membrane as a helical span at residues 3–23; it reads LFSAYALAFSLLMIPLILYIL. Cys-433 is a binding site for heme. Asn-455 is a glycosylation site (N-linked (GlcNAc...) asparagine).

This sequence belongs to the cytochrome P450 family. Heme serves as cofactor.

The protein resides in the membrane. It functions in the pathway secondary metabolite biosynthesis. Functionally, cytochrome P450 monooxygenase, part of the gene cluster that mediates the biosynthesis of melleolides, a range of antifungal and phytotoxic polyketide derivatives composed of an orsellinic acid (OA) moiety esterified to various sesquiterpene alcohols. The first step in melleolides biosynthesis is performed by the delta(6)-protoilludene synthase PRO1 which catalyzes the cyclization of farnesyl diphosphate to protoilludene. The orsellinic acid synthase armB produces OA by condensing acetyl-CoA with 3 malonyl-CoA units in a three-round chain elongation reaction folowed by a C2-C7 ring closure. ArmB further catalyzes the trans-esterification of OA to the various sesquiterpene alcohols resulting from the hydroxylation of protoilludene. The melleolides cluster also includes 5 cytochrome P450 monooxygenases, 4 NAD(+)-dependent oxidoreductases, one flavin-dependent oxidoreductase, and one O-methyltransferase. The cytochrome P450 monooxygenases may be involved in protoilludene hydroxylation to elaborate melleolides with multiple alcohol groups, such as melleolide D, which carries alcohol functionalities at C-4, C-5, C-10, and C-13. The role of the NAD(+)-dependent enzymes remains unknown. Numerous melleolides, including arnamial, show 5'-O-methylation of the aromatic moiety which may be catalyzed by the methyltransferase encoded in the cluster. The flavin-dependent oxidoreductase might represent the dehydrogenase yielding the aldehyde in position 1 of arnamial and other melleolides. Finally, several halogenase localized outside of the cluster, are able to catalyze the transfer of a single chlorine atom to the melleolide backbone, resulting in a 6'-chloromelleolide product. The protein is Cytochrome P450 monooxygenase ARMGADRAFT_1018417 of Armillaria gallica (Bulbous honey fungus).